The following is an 809-amino-acid chain: BTB/POZ domain-containing protein At2g30600 (809 aa).

BTB domains follow at residues 211–273 and 351–420; these read SDTV…QILE and SDIK…NMED. The BACK domain occupies 466 to 537; that stretch reads VVSSISSCKL…LMWCMKAEES (72 aa).

Its pathway is protein modification; protein ubiquitination. Its function is as follows. May act as a substrate-specific adapter of an E3 ubiquitin-protein ligase complex (CUL3-RBX1-BTB) which mediates the ubiquitination and subsequent proteasomal degradation of target proteins. This chain is BTB/POZ domain-containing protein At2g30600, found in Arabidopsis thaliana (Mouse-ear cress).